A 379-amino-acid chain; its full sequence is Glucose-insensitive transcription protein 7 (379 aa).

One can recognise a CS domain in the interval 181 to 272 (SNRIRYDWSQ…VSEIKWEALV (92 aa)). Residues 292-379 (ASGNTKNKAK…PPQGMEPKKF (88 aa)) form the SGS domain. The tract at residues 345–379 (SYTESNGTALSTNWKDVKSKTFETKPPQGMEPKKF) is disordered. A compositionally biased stretch (polar residues) spans 346–358 (YTESNGTALSTNW).

Functionally, involved in cyclic AMP (cAMP) pathway, possibly by participating in the assembly or the conformational activation of specific multiprotein complexes. The chain is Glucose-insensitive transcription protein 7 (git7) from Schizosaccharomyces pombe (strain 972 / ATCC 24843) (Fission yeast).